A 394-amino-acid chain; its full sequence is Probable cytosolic iron-sulfur protein assembly protein 1 (394 aa).

WD repeat units lie at residues 10–49 (AHNDKAWCAKSHPTLPLLATASTDRTSHIYNLSAKKNFPL), 56–108 (AHKR…EQDS), 144–184 (GHEN…EEFE), 191–230 (DHQHDVKHITWHPSQNLLASSSYDDTIKLYKQDEDDDDWS), 237–284 (GHGG…TEQI), 313–352 (IHKYAVYSVSWSAKTGKISSTGSDGKLVIYRETESKKWEI), and 359–394 (AHGVYEINSVSWCTLDDKTEVLVTAGDDGAINIWEP).

This sequence belongs to the WD repeat CIA1 family. In terms of assembly, interacts with NAR1.

Its subcellular location is the cytoplasm. The protein localises to the nucleus. Its function is as follows. Essential component of the cytosolic iron-sulfur (Fe/S) protein assembly machinery. Required for the maturation of extramitochondrial Fe/S proteins. In Debaryomyces hansenii (strain ATCC 36239 / CBS 767 / BCRC 21394 / JCM 1990 / NBRC 0083 / IGC 2968) (Yeast), this protein is Probable cytosolic iron-sulfur protein assembly protein 1.